Reading from the N-terminus, the 356-residue chain is Septin-2A (356 aa).

The region spanning 33–305 is the Septin-type G domain; the sequence is KGFEFTLMVV…ENFRSERLKK (273 aa). Residues 43-50 are G1 motif; the sequence is GESGLGKS. Residues 43 to 50, T77, G103, 182 to 190, G240, and R255 contribute to the GTP site; these read GESGLGKS and KADTLTLRE. The interval 100–103 is G3 motif; the sequence is DTPG. The tract at residues 181-184 is G4 motif; that stretch reads AKAD. Residues 259-269 form an important for dimerization region; that stretch reads WGVVEVENTEH.

The protein belongs to the TRAFAC class TrmE-Era-EngA-EngB-Septin-like GTPase superfamily. Septin GTPase family. As to quaternary structure, septins polymerize into heterooligomeric protein complexes that form filaments, and associate with cellular membranes, actin filaments and microtubules. GTPase activity is required for filament formation. Can form heterooligomers with other family members and form filaments. Interacts with wdpcp.

It is found in the cytoplasm. It localises to the cytoskeleton. The protein localises to the spindle. The protein resides in the cleavage furrow. Its subcellular location is the midbody. It is found in the cell projection. It localises to the cilium membrane. In terms of biological role, filament-forming cytoskeletal GTPase. Required for normal organization of the actin cytoskeleton. Plays a role in the biogenesis of polarized columnar-shaped epithelium. Required for the progression through mitosis through regulation of chromosome congression. During anaphase, may be required for chromosome segregation and spindle elongation. Probably plays a role in ciliogenesis and collective cell movements including convergent extension during gastrulation. In cilia, required for the integrity of the diffusion barrier at the base of the primary cilium that prevents diffusion of transmembrane proteins between the cilia and plasma membranes. Controls cell shape and not polarization of cells during convergent extension. The chain is Septin-2A (sept2-a) from Xenopus laevis (African clawed frog).